The chain runs to 325 residues: tRNA N6-adenosine threonylcarbamoyltransferase (325 aa).

Fe cation is bound by residues histidine 110 and histidine 114. Residues 133 to 137 (MVSGG), aspartate 165, glycine 178, and asparagine 268 each bind substrate. Fe cation is bound at residue aspartate 296.

This sequence belongs to the KAE1 / TsaD family. Fe(2+) serves as cofactor.

The protein localises to the cytoplasm. The catalysed reaction is L-threonylcarbamoyladenylate + adenosine(37) in tRNA = N(6)-L-threonylcarbamoyladenosine(37) in tRNA + AMP + H(+). Required for the formation of a threonylcarbamoyl group on adenosine at position 37 (t(6)A37) in tRNAs that read codons beginning with adenine. Is involved in the transfer of the threonylcarbamoyl moiety of threonylcarbamoyl-AMP (TC-AMP) to the N6 group of A37, together with TsaE and TsaB. TsaD likely plays a direct catalytic role in this reaction. This chain is tRNA N6-adenosine threonylcarbamoyltransferase, found in Thermosipho melanesiensis (strain DSM 12029 / CIP 104789 / BI429).